We begin with the raw amino-acid sequence, 978 residues long: Rab3 GTPase-activating protein catalytic subunit (978 aa).

Disordered regions lie at residues 533–554, 586–621, and 908–936; these read EGKK…TASD, HSDT…RLHQ, and EEEP…GREL. Residues 540–554 show a composition bias toward polar residues; sequence LYSSSESSVNKTASD. 2 stretches are compositionally biased toward basic and acidic residues: residues 586 to 619 and 909 to 922; these read HSDT…EGRL and EEPK…DRRQ.

This sequence belongs to the Rab3-GAP catalytic subunit family. As to quaternary structure, the Rab3 GTPase-activating complex is a heterodimer composed of rab3gap1 and rab3gap2. The Rab3 GTPase-activating complex interacts with DMXL2. Interacts with LMAN1.

It localises to the cytoplasm. It is found in the endoplasmic reticulum. The protein resides in the golgi apparatus. Its subcellular location is the cis-Golgi network. Catalytic subunit of the Rab3 GTPase-activating (Rab3GAP) complex composed of rab3gap1 and rab3gap2, which has GTPase-activating protein (GAP) activity towards various Rab3 subfamily members (RAB3A, RAB3B, RAB3C and RAB3D), RAB5A and RAB43, and guanine nucleotide exchange factor (GEF) activity towards RAB18. As part of the Rab3GAP complex, acts as a GAP for Rab3 proteins by converting active RAB3-GTP to the inactive form RAB3-GDP. Rab3 proteins are involved in regulated exocytosis of neurotransmitters and hormones. The Rab3GAP complex, acts as a GEF for RAB18 by promoting the conversion of inactive RAB18-GDP to the active form RAB18-GTP. Recruits and stabilizes RAB18 at the cis-Golgi membrane where RAB18 is most likely activated. Also involved in RAB18 recruitment at the endoplasmic reticulum (ER) membrane where it maintains proper ER structure. Required for normal eye and brain development. May participate in neurodevelopmental processes such as proliferation, migration and differentiation before synapse formation, and non-synaptic vesicular release of neurotransmitters. This chain is Rab3 GTPase-activating protein catalytic subunit (rab3gap1), found in Xenopus laevis (African clawed frog).